Reading from the N-terminus, the 132-residue chain is D-beta-hydroxybutyrate dehydrogenase, mitochondrial (132 aa).

3-27 (LVTGCDSGFGFSLAKHLHSKGFLVF) is a binding site for NAD(+). K17 bears the N6-acetyllysine mark. Residue S59 participates in substrate binding. Y66 serves as the catalytic Proton acceptor. At K70 the chain carries N6-acetyllysine. O-linked (GlcNAc) serine glycosylation occurs at S77. Position 104 is a phosphoserine (S104).

Belongs to the short-chain dehydrogenases/reductases (SDR) family. Homotetramer.

The protein localises to the mitochondrion inner membrane. The protein resides in the mitochondrion matrix. The catalysed reaction is (R)-3-hydroxybutanoate + NAD(+) = acetoacetate + NADH + H(+). Its activity is regulated as follows. Requires phosphatidylcholine as an allosteric activator for enzymatic activity. This chain is D-beta-hydroxybutyrate dehydrogenase, mitochondrial, found in Mesocricetus auratus (Golden hamster).